The chain runs to 250 residues: Large ribosomal subunit protein uL30 (250 aa).

The protein belongs to the universal ribosomal protein uL30 family.

The protein is Large ribosomal subunit protein uL30 (RPL7) of Yarrowia lipolytica (strain CLIB 122 / E 150) (Yeast).